Consider the following 271-residue polypeptide: 60 kDa heat shock protein, mitochondrial (271 aa).

2 positions are modified to phosphoserine: serine 30 and serine 33. 50 to 54 provides a ligand contact to ATP; the sequence is DGTTT. N6-acetyllysine is present on lysine 83. N6-acetyllysine; alternate occurs at positions 84, 97, and 112. N6-succinyllysine; alternate occurs at positions 84, 97, and 112. An N6-acetyllysine modification is found at lysine 125. At lysine 126 the chain carries N6-acetyllysine; alternate. At lysine 126 the chain carries N6-succinyllysine; alternate. The residue at position 145 (lysine 145) is an N6-acetyllysine. Lysine 175 is subject to N6-succinyllysine. An N6-acetyllysine mark is found at lysine 188 and lysine 237. Glycine 257 lines the ATP pocket. Lysine 270 carries the post-translational modification N6-acetyllysine.

It belongs to the chaperonin (HSP60) family. As to quaternary structure, homoheptamer arranged in a ring structure. The functional units of these chaperonins consist of heptameric rings of the large subunit Hsp60, which function as a back-to-back double ring. Interacts with 2 heptameric Hsp10 rings to form the symmetrical football complex. Interacts with HRAS. Interacts with ATAD3A. Interacts with ETFBKMT and EEF1AKMT3. Interacts with MFHAS1. Detected at higher levels in caput epididymal spermatazoa than in cauda epididymal spermatazoa (at protein level).

The protein resides in the mitochondrion matrix. The enzyme catalyses ATP + H2O + a folded polypeptide = ADP + phosphate + an unfolded polypeptide.. In terms of biological role, chaperonin implicated in mitochondrial protein import and macromolecular assembly. Together with Hsp10, facilitates the correct folding of imported proteins. May also prevent misfolding and promote the refolding and proper assembly of unfolded polypeptides generated under stress conditions in the mitochondrial matrix. The functional units of these chaperonins consist of heptameric rings of the large subunit Hsp60, which function as a back-to-back double ring. In a cyclic reaction, Hsp60 ring complexes bind one unfolded substrate protein per ring, followed by the binding of ATP and association with 2 heptameric rings of the co-chaperonin Hsp10. This leads to sequestration of the substrate protein in the inner cavity of Hsp60 where, for a certain period of time, it can fold undisturbed by other cell components. Synchronous hydrolysis of ATP in all Hsp60 subunits results in the dissociation of the chaperonin rings and the release of ADP and the folded substrate protein. This Mesocricetus auratus (Golden hamster) protein is 60 kDa heat shock protein, mitochondrial.